The chain runs to 317 residues: Anamorsin homolog 2 (317 aa).

Residues 1 to 162 (MAKKVGVLLF…KPSWDSASVF (162 aa)) form an N-terminal SAM-like domain region. The tract at residues 163 to 229 (QLRKGSSQKG…EDDLLTEEDL (67 aa)) is linker. 4 residues coordinate [2Fe-2S] cluster: C240, C247, C250, and C252. Positions 240 to 252 (CAPTKKACKNCTC) are fe-S binding site A. [4Fe-4S] cluster is bound by residues C278, C281, C289, and C292. Short sequence motifs (cx2C motif) lie at residues 278-281 (CGSC) and 289-292 (CAGC). Residues 278–292 (CGSCGLGDAFRCAGC) form a fe-S binding site B region.

It belongs to the anamorsin family. In terms of assembly, monomer. Requires [2Fe-2S] cluster as cofactor. [4Fe-4S] cluster serves as cofactor.

The protein localises to the cytoplasm. The protein resides in the mitochondrion intermembrane space. In terms of biological role, component of the cytosolic iron-sulfur (Fe-S) protein assembly (CIA) machinery. Required for the maturation of extramitochondrial Fe-S proteins. Part of an electron transfer chain functioning in an early step of cytosolic Fe-S biogenesis, facilitating the de novo assembly of a [4Fe-4S] cluster on the cytosolic Fe-S scaffold complex. Electrons are transferred from NADPH via a FAD- and FMN-containing diflavin oxidoreductase. Together with the diflavin oxidoreductase, also required for the assembly of the diferric tyrosyl radical cofactor of ribonucleotide reductase (RNR), probably by providing electrons for reduction during radical cofactor maturation in the catalytic small subunit. The chain is Anamorsin homolog 2 from Physcomitrium patens (Spreading-leaved earth moss).